We begin with the raw amino-acid sequence, 338 residues long: MNLQRFPRYPLTFGPTPIQPLKRLSAHLGGKVELFAKREDCNSGLAFGGNKTRKLEYLIPEALEGGYDTLVSIGGIQSNQTRQVAAVAAHLGLKCVLVQENWVNYSDAVYDRVGNIEMSRIMGADVRLDSAGFDIGIRPSWEQAMDDVRKRGGKPFPIPAGCSEHPLGGLGFVGFAEEVRQQEAELGFKFDYIVVCSVTGSTQAGMVVGFAADGRADKVIGIDASAKPEQTRAQILRIAQHTAELVDLGRNITERDVVLDTRYGGPEYGLPNEGTLEAIRLCARQEAMLTDPVYEGKSMHGMIDMVRNGEFPAGSRVLYAHLGGVPALNAYSFIFRNG.

Residue lysine 51 is modified to N6-(pyridoxal phosphate)lysine. Residue serine 78 is the Nucleophile of the active site.

The protein belongs to the ACC deaminase/D-cysteine desulfhydrase family. In terms of assembly, homotrimer. The cofactor is pyridoxal 5'-phosphate.

The enzyme catalyses 1-aminocyclopropane-1-carboxylate + H2O = 2-oxobutanoate + NH4(+). In terms of biological role, catalyzes a cyclopropane ring-opening reaction, the irreversible conversion of 1-aminocyclopropane-1-carboxylate (ACC) to ammonia and alpha-ketobutyrate. Allows growth on ACC as a nitrogen source. The polypeptide is 1-aminocyclopropane-1-carboxylate deaminase (Ralstonia pickettii (strain 12J)).